Consider the following 480-residue polypeptide: Probable ATP-dependent RNA helicase DDX49 (480 aa).

Positions 2-30 (AGFAEIGLSSWLVEQCRQLGLKQPTPVQL) match the Q motif motif. The Helicase ATP-binding domain occupies 33–207 (IPAILEGRDC…GLATNEPFFW (175 aa)). Residue 46 to 53 (AKTGSGKT) participates in ATP binding. The DEAD box signature appears at 152–155 (DEAD). The Helicase C-terminal domain maps to 218–382 (QLDQRYLLVP…ELVVEEAEVL (165 aa)). A disordered region spans residues 438-480 (QQNRRFKEKVGQTLRRQKAGSTVRRSRPPRSRPQEPAQAEAQD).

The protein belongs to the DEAD box helicase family. DDX49/DBP8 subfamily.

The protein resides in the nucleus. It localises to the nucleolus. The enzyme catalyses ATP + H2O = ADP + phosphate + H(+). ATP-dependent RNA helicase that plays a role in various aspects of RNA metabolism including the regulation of mRNA export and the levels of pre-ribosomal RNA. Regulates the stability and synthesis of pre-ribosomal RNA and thereby regulates cell proliferation. Also possesses antiviral activity by recognizing gammaherpesvirus transcripts in the context of lytic reactivation. The sequence is that of Probable ATP-dependent RNA helicase DDX49 (Ddx49) from Mus musculus (Mouse).